An 86-amino-acid polypeptide reads, in one-letter code: MKTLLLTLVVVTIVCLDLGYTLTCLNCPEMFCGKFQICRNGEKICFKKLHQRRPLSWRYIRGCADTCPVGKPYEMIECCSTDKCNR.

A signal peptide spans 1–21; that stretch reads MKTLLLTLVVVTIVCLDLGYT. Disulfide bonds link C24/C45, C27/C32, C38/C63, C67/C78, and C79/C84.

It belongs to the three-finger toxin family. Ancestral subfamily. Orphan group II sub-subfamily. As to quaternary structure, monomer in solution. Post-translationally, the disulfide bond Cys-27-Cys-32 is probably not needed for efficient interaction of the toxin with the target receptor (Torpedo muscle or alpha-7/CHRNA7 nAChR). In terms of tissue distribution, expressed by the venom gland.

It localises to the secreted. Functionally, neurotoxin that irreversibly inhibits nicotinic acetylcholine receptors (nAChR) and allosterically interacts with muscarinic acetylcholine receptors (mAChR). The loop II is involved in the interaction of this toxin with nAChR and mAChR. On nAChR, it acts as a competitive antagonist (muscle-type and alpha-7/CHRNA7) with IC(50) values in the micromolar range. On mAChR, in presence of ACh, it partially inhibits the effect of acetylcholine (ACh) (allosteric antagonist), whereas in the absence of ACh, it activates the receptor (allosteric agonist). It also shows a very weak inhibition of GABA(A) receptor composed of alpha-1-beta-3-gamma-2 (GABRA1 and GABRB3 and GABRG2) subunits (10 uM inhibit 31% current). In vivo, is nonlethal to mice at concentrations up to 20 mg/kg, but exerts a myorelaxant effect, induces a dose-dependent decrease in blood pressure and an increase in heart rate in mice and rats. This Naja kaouthia (Monocled cobra) protein is Tryptophan-containing weak neurotoxin.